Here is a 156-residue protein sequence, read N- to C-terminus: Small ribosomal subunit protein uS7 (156 aa).

This sequence belongs to the universal ribosomal protein uS7 family. Part of the 30S ribosomal subunit. Contacts proteins S9 and S11.

Its function is as follows. One of the primary rRNA binding proteins, it binds directly to 16S rRNA where it nucleates assembly of the head domain of the 30S subunit. Is located at the subunit interface close to the decoding center, probably blocks exit of the E-site tRNA. In Clostridium botulinum (strain Kyoto / Type A2), this protein is Small ribosomal subunit protein uS7.